The following is a 423-amino-acid chain: Maltooligosaccharide ABC transporter solute-binding lipoprotein (423 aa).

The first 24 residues, 1–24 (MSSKFMKSTAVLGTVTLASLLLVA), serve as a signal peptide directing secretion. The N-palmitoyl cysteine moiety is linked to residue cysteine 25. Cysteine 25 carries S-diacylglycerol cysteine lipidation. Substrate-binding positions include tyrosine 52, aspartate 77, aspartate 83, 103–104 (DR), glutamate 148, aspartate 193, asparagine 196, 251–254 (EGAG), tryptophan 274, and lysine 307.

Belongs to the bacterial solute-binding protein 1 family.

Its subcellular location is the cell membrane. In terms of biological role, part of an ABC transporter complex involved in the uptake of maltodextrins. Binds glycogen-derived linear maltooligosaccharides increasing in size from maltotriose to maltooctaose with the highest affinity for maltotriose. Has a very weak affinity for maltose. Has also a very low affinity for maltotetraitol, indicating that the binding is selective for maltooligosaccharides with an intact reducing end. In Streptococcus pneumoniae (strain ATCC BAA-255 / R6), this protein is Maltooligosaccharide ABC transporter solute-binding lipoprotein (malX).